Consider the following 247-residue polypeptide: Probable transcriptional regulatory protein Spro_2779 (247 aa).

The protein belongs to the TACO1 family.

It localises to the cytoplasm. The protein is Probable transcriptional regulatory protein Spro_2779 of Serratia proteamaculans (strain 568).